Here is a 207-residue protein sequence, read N- to C-terminus: Large ribosomal subunit protein uL3c (207 aa).

Residues 128-148 (FTRGPMTHGSKNHRAPGSIGM) are disordered.

This sequence belongs to the universal ribosomal protein uL3 family. In terms of assembly, part of the 50S ribosomal subunit.

It is found in the plastid. Its subcellular location is the chloroplast. In terms of biological role, one of the primary rRNA binding proteins, it binds directly near the 3'-end of the 23S rRNA, where it nucleates assembly of the 50S subunit. The sequence is that of Large ribosomal subunit protein uL3c (rpl3) from Trieres chinensis (Marine centric diatom).